Consider the following 364-residue polypeptide: Fructose-bisphosphate aldolase B (364 aa).

Ala2 is modified (N-acetylalanine). N6-succinyllysine is present on Lys13. Residue Ser36 is modified to Phosphoserine. A Phosphothreonine modification is found at Thr39. Arg43 serves as a coordination point for beta-D-fructose 1,6-bisphosphate. Residue Ser89 is modified to Phosphoserine. Thr119 carries the phosphothreonine modification. Lys121 is modified (N6-succinyllysine). A Phosphoserine modification is found at Ser132. The active-site Proton acceptor is Glu188. Catalysis depends on Lys230, which acts as the Schiff-base intermediate with dihydroxyacetone-P. Residues Ser272, Ser276, Ser299, and Ser301 each carry the phosphoserine modification. Residue 272–274 (SGG) participates in beta-D-fructose 1,6-bisphosphate binding. A beta-D-fructose 1,6-bisphosphate-binding site is contributed by Arg304. Residue Ser309 is modified to Phosphoserine. At Lys317 the chain carries N6-succinyllysine.

This sequence belongs to the class I fructose-bisphosphate aldolase family. Homotetramer. Interacts with BBS1, BBS2, BBS4 and BBS7. Forms a ternary complex with G6PD and TP53; this interaction is direct.

It is found in the cytoplasm. It localises to the cytosol. The protein resides in the cytoskeleton. The protein localises to the microtubule organizing center. Its subcellular location is the centrosome. It is found in the centriolar satellite. The catalysed reaction is beta-D-fructose 1,6-bisphosphate = D-glyceraldehyde 3-phosphate + dihydroxyacetone phosphate. The enzyme catalyses beta-D-fructose 1-phosphate = D-glyceraldehyde + dihydroxyacetone phosphate. It functions in the pathway carbohydrate degradation; glycolysis; D-glyceraldehyde 3-phosphate and glycerone phosphate from D-glucose: step 4/4. The protein operates within carbohydrate biosynthesis; gluconeogenesis. Its pathway is carbohydrate metabolism; fructose metabolism. Catalyzes the aldol cleavage of fructose 1,6-biphosphate to form two triosephosphates dihydroxyacetone phosphate and D-glyceraldehyde 3-phosphate in glycolysis as well as the reverse stereospecific aldol addition reaction in gluconeogenesis. In fructolysis, metabolizes fructose 1-phosphate derived from the phosphorylation of dietary fructose by fructokinase into dihydroxyacetone phosphate and D-glyceraldehyde. Acts as an adapter independently of its enzymatic activity, exerts a tumor suppressor role by stabilizing the ternary complex with G6PD and TP53 to inhibit G6PD activity and keep oxidative pentose phosphate metabolism in check. This chain is Fructose-bisphosphate aldolase B (ALDOB), found in Oryctolagus cuniculus (Rabbit).